Consider the following 390-residue polypeptide: MYMIESKGGAIACMLLALLFLGTWPAIMTLTERRGRLPQHTYLDYTLTNLLAAVIIALTLGEIGPSRPNFFTQLSQDNWQSVMFAMAGGIVLSLGNLATQYAWAYVGLSVTEVITASITVVIGTTLNYFLDDRINRAEVLFPGVACFLIAVCFGSAVHKSNAADNKTKLQNFKSLETTSSFEMETISASNGLTKGKAKEGTAAFLIELEKQRAIKVFGKSTIIGLVITFFAGICFSLFSPAFNLATNDQWHTLKHGVPKLNVYTAFFYFSISAFVVALILNIRFLYWPILGLPRSSFKAYLNDWNGRGWSFLAGFLCGFGNGLQFMGGQAAGYAAADAVQALPLVSTFWGILLFGEYRRSSRKTYTLLISMLLMFIVAVAVLMASSGHRK.

The Extracellular portion of the chain corresponds to 1 to 9; the sequence is MYMIESKGG. Residues 10-30 traverse the membrane as a helical segment; sequence AIACMLLALLFLGTWPAIMTL. Residues 31-44 are Cytoplasmic-facing; that stretch reads TERRGRLPQHTYLD. The helical transmembrane segment at 45–65 threads the bilayer; the sequence is YTLTNLLAAVIIALTLGEIGP. At 66 to 78 the chain is on the extracellular side; that stretch reads SRPNFFTQLSQDN. A helical membrane pass occupies residues 79 to 99; the sequence is WQSVMFAMAGGIVLSLGNLAT. At 100-101 the chain is on the cytoplasmic side; that stretch reads QY. Residues 102–122 traverse the membrane as a helical segment; the sequence is AWAYVGLSVTEVITASITVVI. Over 123 to 136 the chain is Extracellular; sequence GTTLNYFLDDRINR. The chain crosses the membrane as a helical span at residues 137 to 157; it reads AEVLFPGVACFLIAVCFGSAV. The Cytoplasmic portion of the chain corresponds to 158 to 221; the sequence is HKSNAADNKT…RAIKVFGKST (64 aa). 213–220 lines the ATP pocket; that stretch reads AIKVFGKS. A helical membrane pass occupies residues 222 to 242; sequence IIGLVITFFAGICFSLFSPAF. The Extracellular portion of the chain corresponds to 243–261; the sequence is NLATNDQWHTLKHGVPKLN. A helical membrane pass occupies residues 262 to 282; that stretch reads VYTAFFYFSISAFVVALILNI. Residues 283-307 are Cytoplasmic-facing; that stretch reads RFLYWPILGLPRSSFKAYLNDWNGR. The helical transmembrane segment at 308 to 328 threads the bilayer; sequence GWSFLAGFLCGFGNGLQFMGG. At 329-333 the chain is on the extracellular side; sequence QAAGY. The helical transmembrane segment at 334–354 threads the bilayer; the sequence is AAADAVQALPLVSTFWGILLF. Over 355–363 the chain is Cytoplasmic; sequence GEYRRSSRK. Residues 364 to 384 traverse the membrane as a helical segment; sequence TYTLLISMLLMFIVAVAVLMA. Residues 385 to 390 lie on the Extracellular side of the membrane; that stretch reads SSGHRK.

It belongs to the plant ureide permease (TC 2.A.7.19) family. In terms of tissue distribution, expressed in leaves, flowers, roots and stems.

Its subcellular location is the membrane. Functionally, proton-coupled transporter that transports a wide spectrum of oxo derivatives of heterocyclic nitrogen compounds, including allantoin, uric acid and xanthine, but not adenine. Mediates high affinity transport of uracil and 5-fluorouracil (a toxic uracil analog). Mediates transport of free pyrimidines and may function during early seedling development in salvage pathways, by the utilization of pyrimidines from seed storage tissue. The chain is Ureide permease 1 from Arabidopsis thaliana (Mouse-ear cress).